The sequence spans 345 residues: N-acetyl-gamma-glutamyl-phosphate reductase (345 aa).

The active site involves C149.

The protein belongs to the NAGSA dehydrogenase family. Type 1 subfamily.

Its subcellular location is the cytoplasm. It carries out the reaction N-acetyl-L-glutamate 5-semialdehyde + phosphate + NADP(+) = N-acetyl-L-glutamyl 5-phosphate + NADPH + H(+). Its pathway is amino-acid biosynthesis; L-arginine biosynthesis; N(2)-acetyl-L-ornithine from L-glutamate: step 3/4. In terms of biological role, catalyzes the NADPH-dependent reduction of N-acetyl-5-glutamyl phosphate to yield N-acetyl-L-glutamate 5-semialdehyde. This is N-acetyl-gamma-glutamyl-phosphate reductase from Bacillus cereus (strain 03BB102).